The primary structure comprises 805 residues: Probable exo-1,4-beta-xylosidase xlnD (805 aa).

The signal sequence occupies residues 1–17 (MAVAALALLALLPQALG). Asparagine 20, asparagine 115, asparagine 140, asparagine 235, and asparagine 244 each carry an N-linked (GlcNAc...) asparagine glycan. The active site involves aspartate 308. Residues asparagine 350, asparagine 383, asparagine 405, asparagine 434, asparagine 445, asparagine 486, asparagine 490, asparagine 622, asparagine 653, asparagine 667, asparagine 689, and asparagine 711 are each glycosylated (N-linked (GlcNAc...) asparagine).

This sequence belongs to the glycosyl hydrolase 3 family.

The protein resides in the secreted. The catalysed reaction is Hydrolysis of (1-&gt;4)-beta-D-xylans, to remove successive D-xylose residues from the non-reducing termini.. It participates in glycan degradation; xylan degradation. In terms of biological role, xylan 1,4-beta-xylosidase involved in the hydrolysis of xylan, a major structural heterogeneous polysaccharide found in plant biomass representing the second most abundant polysaccharide in the biosphere, after cellulose. The chain is Probable exo-1,4-beta-xylosidase xlnD (xlnD) from Aspergillus aculeatus.